The sequence spans 172 residues: Adenine phosphoribosyltransferase (172 aa).

Belongs to the purine/pyrimidine phosphoribosyltransferase family. In terms of assembly, homodimer.

The protein localises to the cytoplasm. The catalysed reaction is AMP + diphosphate = 5-phospho-alpha-D-ribose 1-diphosphate + adenine. Its pathway is purine metabolism; AMP biosynthesis via salvage pathway; AMP from adenine: step 1/1. Catalyzes a salvage reaction resulting in the formation of AMP, that is energically less costly than de novo synthesis. The polypeptide is Adenine phosphoribosyltransferase (Clostridium perfringens (strain ATCC 13124 / DSM 756 / JCM 1290 / NCIMB 6125 / NCTC 8237 / Type A)).